The following is a 142-amino-acid chain: FAD synthase (142 aa).

ATP contacts are provided by residues 9 to 10 (TF), 14 to 17 (HPGH), and Asp-92.

Belongs to the archaeal FAD synthase family. Homodimer. It depends on a divalent metal cation as a cofactor.

The enzyme catalyses FMN + ATP + H(+) = FAD + diphosphate. Its pathway is cofactor biosynthesis; FAD biosynthesis; FAD from FMN: step 1/1. Its function is as follows. Catalyzes the transfer of the AMP portion of ATP to flavin mononucleotide (FMN) to produce flavin adenine dinucleotide (FAD) coenzyme. The protein is FAD synthase of Methanohalophilus mahii (strain ATCC 35705 / DSM 5219 / SLP).